We begin with the raw amino-acid sequence, 242 residues long: MATVSMRDMLKAGVHFGHQTRYWNPKMKPFIFGARNKVHIINLEKTVPMFNDALAEINKIAARKGKVLFVGTKRAASESVKESAISCDQYYVNNRWLGGMLTNWKTVRQSIKRLKELEIQSADGTFEKLTKKEALMRTREMEKLEKSLGGIKNMGGLPDAMFVIDADHEHIAIKEANNLGIPVFSIVDTNSNPDGVDFVIPGNDDAIRSIQLYTGAVAQTVTEARNQDIVVQAEQDGFVAEA.

It belongs to the universal ribosomal protein uS2 family.

The protein is Small ribosomal subunit protein uS2 of Photobacterium profundum (strain SS9).